Reading from the N-terminus, the 58-residue chain is Ferredoxin-2 (58 aa).

4Fe-4S ferredoxin-type domains lie at 2–27 and 30–58; these read IEVNDDCMACEACVEICPDVFEMNEE and KAVVINPDSDLDCVEEAIDSCPAEAIVRS. [3Fe-4S] cluster is bound at residue C8. C11 carries the cysteine methyl disulfide modification. C14 provides a ligand contact to [3Fe-4S] cluster. C18 and C42 form a disulfide bridge. [3Fe-4S] cluster is bound at residue C50.

Homodimer (ferredoxin I) or homotetramer (ferredoxin II). [3Fe-4S] cluster serves as cofactor. The cofactor is [4Fe-4S] cluster.

Functionally, ferredoxins are iron-sulfur proteins that transfer electrons in a wide variety of metabolic reactions. This is Ferredoxin-2 from Megalodesulfovibrio gigas (Desulfovibrio gigas).